The chain runs to 888 residues: Bifunctional uridylyltransferase/uridylyl-removing enzyme (888 aa).

The segment at 1 to 338 (MIITSPLLDY…LPNYERKIEE (338 aa)) is uridylyltransferase. The interval 182–204 (EQAKRHAQHNNTESNLEPDIKNA) is disordered. The segment at 339 to 699 (INENFKLVDG…AHRQSAQDAV (361 aa)) is uridylyl-removing. One can recognise an HD domain in the interval 457 to 579 (VDAHTLLLIR…LGDMEHLDYL (123 aa)). 2 consecutive ACT domains span residues 700–781 (QIFI…GLMQ) and 809–887 (MVEI…IVSQ).

It belongs to the GlnD family. Requires Mg(2+) as cofactor.

The catalysed reaction is [protein-PII]-L-tyrosine + UTP = [protein-PII]-uridylyl-L-tyrosine + diphosphate. The enzyme catalyses [protein-PII]-uridylyl-L-tyrosine + H2O = [protein-PII]-L-tyrosine + UMP + H(+). Its activity is regulated as follows. Uridylyltransferase (UTase) activity is inhibited by glutamine, while glutamine activates uridylyl-removing (UR) activity. Its function is as follows. Modifies, by uridylylation and deuridylylation, the PII regulatory proteins (GlnB and homologs), in response to the nitrogen status of the cell that GlnD senses through the glutamine level. Under low glutamine levels, catalyzes the conversion of the PII proteins and UTP to PII-UMP and PPi, while under higher glutamine levels, GlnD hydrolyzes PII-UMP to PII and UMP (deuridylylation). Thus, controls uridylylation state and activity of the PII proteins, and plays an important role in the regulation of nitrogen assimilation and metabolism. This chain is Bifunctional uridylyltransferase/uridylyl-removing enzyme, found in Acinetobacter baylyi (strain ATCC 33305 / BD413 / ADP1).